The sequence spans 89 residues: Small ribosomal subunit protein bS20 (89 aa).

The tract at residues 1-20 is disordered; it reads MANHKSAEKRARQTIKRTER.

Belongs to the bacterial ribosomal protein bS20 family.

Binds directly to 16S ribosomal RNA. The sequence is that of Small ribosomal subunit protein bS20 from Campylobacter concisus (strain 13826).